Here is a 524-residue protein sequence, read N- to C-terminus: Lysine--tRNA ligase (524 aa).

2 residues coordinate Mg(2+): Glu-433 and Glu-440.

It belongs to the class-II aminoacyl-tRNA synthetase family. As to quaternary structure, homodimer. The cofactor is Mg(2+).

It is found in the cytoplasm. It carries out the reaction tRNA(Lys) + L-lysine + ATP = L-lysyl-tRNA(Lys) + AMP + diphosphate. This Colwellia psychrerythraea (strain 34H / ATCC BAA-681) (Vibrio psychroerythus) protein is Lysine--tRNA ligase.